A 125-amino-acid polypeptide reads, in one-letter code: Oxytocin-neurophysin 1 (125 aa).

A signal peptide spans 1 to 19 (MAGPSLACCLLGLLALTSA). Cysteines 20 and 25 form a disulfide. Glycine 28 is subject to Glycine amide. Cystine bridges form between cysteine 41–cysteine 85, cysteine 44–cysteine 58, cysteine 52–cysteine 75, cysteine 59–cysteine 65, cysteine 92–cysteine 104, cysteine 98–cysteine 116, and cysteine 105–cysteine 110.

It belongs to the vasopressin/oxytocin family. In terms of assembly, interacts with oxytocin receptor (Ki=1.5 nM). Interacts with vasopressin V1aR/AVPR1A (Ki=37 nM), V1bR/AVPR1B (Ki=222 nM) and V2R/AVPR2 receptors (Ki=823 nM).

The protein localises to the secreted. Its function is as follows. Neurophysin 1 specifically binds oxytocin. Oxytocin causes contraction of the smooth muscle of the uterus and of the mammary gland. Acts by binding to oxytocin receptor (OXTR). In Homo sapiens (Human), this protein is Oxytocin-neurophysin 1 (OXT).